Reading from the N-terminus, the 152-residue chain is Natriuretic peptides A (152 aa).

An N-terminal signal peptide occupies residues 1-24 (MGSSAITVSFLLFLAFQLPGQTGA). Propeptides lie at residues 25–122 (NPVY…TAPR) and 92–102 (EGGVLGRGPWE). The disordered stretch occupies residues 58-101 (PSQVLSEQNEEAGAPLSPLSEMPPWMGEVNPAQREGGVLGRGPW). Serine 128 is modified (phosphoserine). A disulfide bond links cysteine 129 and cysteine 145. The segment at 146 to 150 (NSFRY) is important for degradation of atrial natriuretic peptide by IDE.

It belongs to the natriuretic peptide family. In terms of assembly, homodimer; disulfide-linked antiparallel dimer. Post-translationally, the precursor molecule is proteolytically cleaved by CORIN at Arg-122 to produce the atrial natriuretic peptide. Undergoes further proteolytic cleavage by unknown proteases to give rise to long-acting natriuretic peptide, vessel dilator and kaliuretic peptide. Additional processing gives rise to the auriculin and atriopeptin peptides. In the kidneys, alternative processing by an unknown protease results in the peptide urodilatin. Cleavage by MME initiates degradation of the factor and thereby regulates its activity. Degradation by IDE results in reduced activation of NPR1 (in vitro). During IDE degradation, the resulting products can temporarily stimulate NPR2 to produce cGMP, before the fragments are completely degraded and inactivated by IDE (in vitro). In terms of processing, degraded by IDE. Post-translationally, phosphorylation on Ser-128 decreases vasorelaxant activity.

It is found in the secreted. It localises to the perikaryon. Its subcellular location is the cell projection. Its function is as follows. Hormone that plays a key role in mediating cardio-renal homeostasis, and is involved in vascular remodeling and regulating energy metabolism. Acts by specifically binding and stimulating NPR1 to produce cGMP, which in turn activates effector proteins, such as PRKG1, that drive various biological responses. Regulates vasodilation, natriuresis, diuresis and aldosterone synthesis and is therefore essential for regulating blood pressure, controlling the extracellular fluid volume and maintaining the fluid-electrolyte balance. Also involved in inhibiting cardiac remodeling and cardiac hypertrophy by inducing cardiomyocyte apoptosis and attenuating the growth of cardiomyocytes and fibroblasts. Plays a role in female pregnancy by promoting trophoblast invasion and spiral artery remodeling in uterus, and thus prevents pregnancy-induced hypertension. In adipose tissue, acts in various cGMP- and PKG-dependent pathways to regulate lipid metabolism and energy homeostasis. This includes up-regulating lipid metabolism and mitochondrial oxygen utilization by activating the AMP-activated protein kinase (AMPK), and increasing energy expenditure by acting via MAPK11 to promote the UCP1-dependent thermogenesis of brown adipose tissue. Binds the clearance receptor NPR3 which removes the hormone from circulation. Functionally, may have a role in cardio-renal homeostasis through regulation of natriuresis, diuresis, vasodilation, and inhibiting aldosterone synthesis. In vitro, promotes the production of cGMP and induces vasodilation. May promote natriuresis, at least in part, by enhancing prostaglandin E2 synthesis resulting in the inhibition of renal Na+-K+-ATPase. However reports on the involvement of this peptide in mammal blood volume and blood pressure homeostasis are conflicting; according to a report, in vivo it is not sufficient to activate cGMP and does not inhibit collecting duct transport nor effect diuresis and natriuresis. Appears to bind to specific receptors that are distinct from the receptors bound by atrial natriuretic peptide and vessel dilator. Possibly enhances protein excretion in urine by decreasing proximal tubular protein reabsorption. In terms of biological role, may have a role in cardio-renal homeostasis through regulation of natriuresis, diuresis, and vasodilation. In vitro, promotes the production of cGMP and induces vasodilation. May promote natriuresis, at least in part, by enhancing prostaglandin E2 synthesis resulting in the inhibition of renal Na+-K+-ATPase. However reports on the involvement of this peptide in mammal blood volume and blood pressure homeostasis are conflicting; according to a report it is not sufficient to activate cGMP and does not inhibit collecting duct transport nor effect diuresis and natriuresis. Appears to bind to specific receptors that are distinct from the receptors bound by the atrial natriuretic and long-acting natriuretic peptides. Possibly functions in protein excretion in urine by maintaining the integrity of the proximal tubules and enhancing protein excretion by decreasing proximal tubular protein reabsorption. May have a role in cardio-renal homeostasis through regulation of diuresis and inhibiting aldosterone synthesis. In vitro, promotes the production of cGMP and induces vasodilation. May promote natriuresis, at least in part, by enhancing prostaglandin E2 synthesis resulting in the inhibition of renal Na+-K+-ATPase. May have a role in potassium excretion but not sodium excretion (natriuresis). Possibly enhances protein excretion in urine by decreasing proximal tubular protein reabsorption. Its function is as follows. Hormone produced in the kidneys that appears to be important for maintaining cardio-renal homeostasis. Mediates vasodilation, natriuresis and diuresis primarily in the renal system, in order to maintain the extracellular fluid volume and control the fluid-electrolyte balance. Specifically binds and stimulates cGMP production by renal transmembrane receptors, likely NPR1. Urodilatin not ANP, may be the natriuretic peptide responsible for the regulation of sodium and water homeostasis in the kidney. Functionally, may have a role in cardio-renal homeostasis through regulation of natriuresis and vasodilation. In vivo promotes natriuresis and in vitro, vasodilates renal artery strips. In terms of biological role, may have a role in cardio-renal homeostasis through regulation of regulation of natriuresis and vasodilation. In vivo promotes natriuresis. In vitro, vasodilates intestinal smooth muscle but not smooth muscle strips. May have a role in cardio-renal homeostasis through regulation of natriuresis and vasodilation. In vivo promotes natriuresis. In vitro, selectively vasodilates intestinal and vascular smooth muscle strips. Its function is as follows. May have a role in cardio-renal homeostasis through regulation of natriuresis and vasodilation. In vivo promotes natriuresis. In vitro, selectively vasodilates intestinal smooth muscle but not vascular smooth muscle strips. This is Natriuretic peptides A (NPPA) from Bos taurus (Bovine).